Reading from the N-terminus, the 434-residue chain is Glutamate-1-semialdehyde 2,1-aminomutase (434 aa).

Lys-273 carries the N6-(pyridoxal phosphate)lysine modification.

It belongs to the class-III pyridoxal-phosphate-dependent aminotransferase family. HemL subfamily. In terms of assembly, homodimer. Pyridoxal 5'-phosphate is required as a cofactor.

Its subcellular location is the cytoplasm. It catalyses the reaction (S)-4-amino-5-oxopentanoate = 5-aminolevulinate. It functions in the pathway porphyrin-containing compound metabolism; protoporphyrin-IX biosynthesis; 5-aminolevulinate from L-glutamyl-tRNA(Glu): step 2/2. The sequence is that of Glutamate-1-semialdehyde 2,1-aminomutase from Polynucleobacter asymbioticus (strain DSM 18221 / CIP 109841 / QLW-P1DMWA-1) (Polynucleobacter necessarius subsp. asymbioticus).